A 1030-amino-acid chain; its full sequence is Kinesin-related protein 6 (1030 aa).

In terms of domain architecture, SAM spans 3–66; that stretch reads FENDQLYNWL…FHLLQQLKKQ (64 aa). Disordered stretches follow at residues 66-164 and 178-308; these read QTPP…SDFM and RQQY…EDDD. The span at 68–80 shows a compositional bias: polar residues; it reads PPISNTSSPVINS. Low complexity-rich tracts occupy residues 81–117, 125–164, 181–197, and 225–238; these read NNNN…NNNN, TSTS…SDFM, YAKQ…KYQS, and QQQQ…QQQD. Residues 239–290 are compositionally biased toward acidic residues; it reads FEFEEEEEEEDQQQQYDEEEEEEEEYEEDFYKEDLGEIDDGNVLDISDDEPD. The Kinesin motor domain maps to 453-775; the sequence is RIRVCVRKRP…LRYADRVKEL (323 aa). 543-550 is a binding site for ATP; sequence GQTGSGKT. Low complexity-rich tracts occupy residues 826–839, 849–906, and 981–1009; these read INSQ…TSQP, QQQE…QTQP, and PIQQ…QTPQ. Disordered stretches follow at residues 826–915 and 981–1030; these read INSQ…KIDF and PIQQ…SSRN.

The protein belongs to the TRAFAC class myosin-kinesin ATPase superfamily. Kinesin family.

Its subcellular location is the cytoplasm. The protein localises to the cytoskeleton. Functionally, microtubule-associated force-producing protein that plays a role in organelle transport. Its motor activity is directed toward the microtubule's plus end. This Dictyostelium discoideum (Social amoeba) protein is Kinesin-related protein 6 (kif6).